Reading from the N-terminus, the 263-residue chain is Polyglutamine-binding protein 1 (263 aa).

Residues 46-80 (EGLPPSWYKVFDPSCGLPYYWNVETDLVSWLSPHD) enclose the WW domain. Residues 94–263 (NNNADAEDKS…AEASRTKQQD (170 aa)) form a disordered region. Basic and acidic residues predominate over residues 99–173 (AEDKSDRNLE…DKADREEGKD (75 aa)). One copy of the 1-1; approximate repeat lies at 104–110 (DRNLEKV). The tract at residues 104-138 (DRNLEKVDRNHEKSDRSHEKPDRSHEKADRNHEKN) is 5 X 7 AA approximate tandem repeats of D-R-[NS]-H-E-K-S. The stretch at 111-117 (DRNHEKS) is one 1-2 repeat. One copy of the 1-3; approximate repeat lies at 118–124 (DRSHEKP). The stretch at 125 to 131 (DRSHEKA) is one 1-4; approximate repeat. A 1-5; approximate repeat occupies 132–138 (DRNHEKN). A run of 9 repeats spans residues 139 to 140 (DR), 141 to 142 (ER), 143 to 144 (ER), 150 to 151 (DR), 152 to 153 (ER), 154 to 155 (DR), 156 to 157 (DR), 158 to 159 (ER), and 160 to 161 (ER). The 3 X 2 AA tandem repeats of [DE]-R stretch occupies residues 139 to 144 (DRERER). Residues 150 to 161 (DRERDRDRERER) form a 6 X 2 AA tandem repeats of [DE]-R region. The interval 243 to 253 (YPSPGAVLRAN) is important for interaction with TXNL4A. The residue at position 245 (S245) is a Phosphoserine.

In terms of assembly, interacts with POU3F2/Brn-2, ATXN1, TXNL4A, HTT and AR. Interaction with ATXN1 correlates positively with the length of the polyglutamine tract. Interacts with RNA polymerase II large subunit in a phosphorylation-dependent manner. Forms a ternary complex with ATXN1 mutant and phosphorylated RNA polymerase II. Interacts (via C-terminus) with TXNL4A and CD2BP2. Interacts (via WW domain) with ATN1 and SF3B1, and may interact with additional splice factors. Interacts (via WW domain) with WBP11; Leading to reduce interaction between PQBP1 and TXNL4A. Interacts with CAPRIN1. Interacts with DDX1. Interacts with SFPQ. Interacts with KHSRP. Detected in brain cortex and hippocampus neurons (at protein level). Expressed in brain with high level in cerebellar cortex, hippocampus and olfactory bulb.

The protein resides in the nucleus. The protein localises to the nucleus speckle. It localises to the cytoplasmic granule. Intrinsically disordered protein that acts as a scaffold, and which is involved in different processes, such as pre-mRNA splicing, transcription regulation, innate immunity and neuron development. Interacts with splicing-related factors via the intrinsically disordered region and regulates alternative splicing of target pre-mRNA species. May suppress the ability of POU3F2 to transactivate the DRD1 gene in a POU3F2 dependent manner. Can activate transcription directly or via association with the transcription machinery. May be involved in ATXN1 mutant-induced cell death. The interaction with ATXN1 mutant reduces levels of phosphorylated RNA polymerase II large subunit. Involved in the assembly of cytoplasmic stress granule, possibly by participating in the transport of neuronal RNA granules. Also acts as an innate immune sensor of infection by retroviruses, by detecting the presence of reverse-transcribed DNA in the cytosol. Directly binds retroviral reverse-transcribed DNA in the cytosol and interacts with CGAS, leading to activate the cGAS-STING signaling pathway, triggering type-I interferon production. The sequence is that of Polyglutamine-binding protein 1 (Pqbp1) from Mus musculus (Mouse).